Here is a 94-residue protein sequence, read N- to C-terminus: Selenoprotein K (94 aa).

Residues 20–42 form a helical membrane-spanning segment; it reads LSFITDFFWGIAEFVVLFFRTLL. Residues 48–94 are disordered; it reads KRRGYGGSSDSRYDDGRGPPGNPPRRMGRINHLRGPNPPPMAGGUGR. A non-standard amino acid (selenocysteine) is located at residue selenocysteine 92.

The protein belongs to the selenoprotein K family. In terms of assembly, interacts with DERL1, DERL2, DERL3 and SELENOS. The SELENOK-SELENOS complex interacts with VCP. Interacts with ZDHHC6. In terms of processing, cleaved by CAPN2/m-calpain in resting macrophages but not in activated macrophages. Macrophage activation up-regulates expression of the calpain inhibitor CAST/calpastatin, resulting in inhibition of CAPN2 activity. Post-translationally, truncated SELENOK proteins produced by failed UGA/Sec decoding are ubiquitinated by the CRL2(KLHDC2) complex, which recognizes the diglycine (Gly-Gly) at the C-terminus of truncated SELENOK proteins.

The protein localises to the endoplasmic reticulum membrane. The protein resides in the cell membrane. In terms of biological role, required for Ca(2+) flux in immune cells and plays a role in T-cell proliferation and in T-cell and neutrophil migration. Involved in endoplasmic reticulum-associated degradation (ERAD) of soluble glycosylated proteins. Required for palmitoylation and cell surface expression of CD36 and involved in macrophage uptake of low-density lipoprotein and in foam cell formation. Together with ZDHHC6, required for palmitoylation of ITPR1 in immune cells, leading to regulate ITPR1 stability and function. Plays a role in protection of cells from ER stress-induced apoptosis. Protects cells from oxidative stress when overexpressed in cardiomyocytes. The polypeptide is Selenoprotein K (Sus scrofa (Pig)).